The primary structure comprises 367 residues: Glutamate 5-kinase (367 aa).

Residue Lys-9 coordinates ATP. 3 residues coordinate substrate: Ser-49, Asp-136, and Asn-148. Residues 168 to 169 (TD) and 210 to 216 (TGGMKSK) contribute to the ATP site. The PUA domain maps to 276-350 (SGQIEVDAGA…GMQSQDIQVR (75 aa)).

Belongs to the glutamate 5-kinase family.

It is found in the cytoplasm. It carries out the reaction L-glutamate + ATP = L-glutamyl 5-phosphate + ADP. Its pathway is amino-acid biosynthesis; L-proline biosynthesis; L-glutamate 5-semialdehyde from L-glutamate: step 1/2. In terms of biological role, catalyzes the transfer of a phosphate group to glutamate to form L-glutamate 5-phosphate. In Bacillus cereus (strain ATCC 14579 / DSM 31 / CCUG 7414 / JCM 2152 / NBRC 15305 / NCIMB 9373 / NCTC 2599 / NRRL B-3711), this protein is Glutamate 5-kinase.